The sequence spans 251 residues: PF03932 family protein CutC (251 aa).

It belongs to the CutC family.

Its subcellular location is the cytoplasm. This is PF03932 family protein CutC from Bacteroides fragilis (strain ATCC 25285 / DSM 2151 / CCUG 4856 / JCM 11019 / LMG 10263 / NCTC 9343 / Onslow / VPI 2553 / EN-2).